The primary structure comprises 486 residues: uncharacterized protein (486 aa).

A helical transmembrane segment spans residues 7–28 (HVISIFETVGAYFINIFYNFLY). 3 N-linked (GlcNAc...) asparagine; by host glycosylation sites follow: N73, N83, and N195. A coiled-coil region spans residues 183–233 (ELEETYARLSSYNRSLLYQIEELTSEKKSFLEELSTLRKKYEKRQSEYRRL). The tract at residues 299–329 (SQEVTSKSPNNYPVPQSRTIVNKPSDNYPVP) is disordered. Polar residues predominate over residues 300–323 (QEVTSKSPNNYPVPQSRTIVNKPS). A glycan (N-linked (GlcNAc...) asparagine; by host) is linked at N461.

It belongs to the asfivirus B475L family.

It is found in the host membrane. This is an uncharacterized protein from Ornithodoros (relapsing fever ticks).